The sequence spans 317 residues: Methionyl-tRNA formyltransferase (317 aa).

A (6S)-5,6,7,8-tetrahydrofolate-binding site is contributed by 112–115 (SLLP).

This sequence belongs to the Fmt family.

It carries out the reaction L-methionyl-tRNA(fMet) + (6R)-10-formyltetrahydrofolate = N-formyl-L-methionyl-tRNA(fMet) + (6S)-5,6,7,8-tetrahydrofolate + H(+). Attaches a formyl group to the free amino group of methionyl-tRNA(fMet). The formyl group appears to play a dual role in the initiator identity of N-formylmethionyl-tRNA by promoting its recognition by IF2 and preventing the misappropriation of this tRNA by the elongation apparatus. This chain is Methionyl-tRNA formyltransferase, found in Mycoplasma capricolum subsp. capricolum (strain California kid / ATCC 27343 / NCTC 10154).